The sequence spans 460 residues: Fumarate hydratase class II (460 aa).

Substrate contacts are provided by residues 95 to 97 (SGT), 126 to 129 (HPND), 136 to 138 (SSN), and Thr184. His185 serves as the catalytic Proton donor/acceptor. Ser315 is a catalytic residue. Substrate is bound by residues Ser316 and 321 to 323 (KIN).

This sequence belongs to the class-II fumarase/aspartase family. Fumarase subfamily. As to quaternary structure, homotetramer.

The protein localises to the cytoplasm. The enzyme catalyses (S)-malate = fumarate + H2O. The protein operates within carbohydrate metabolism; tricarboxylic acid cycle; (S)-malate from fumarate: step 1/1. Functionally, involved in the TCA cycle. Catalyzes the stereospecific interconversion of fumarate to L-malate. This is Fumarate hydratase class II from Chlamydia caviae (strain ATCC VR-813 / DSM 19441 / 03DC25 / GPIC) (Chlamydophila caviae).